We begin with the raw amino-acid sequence, 622 residues long: Phosphomethylpyrimidine synthase (622 aa).

Residues Glu-109–Asn-130 form a disordered region. Substrate is bound by residues Asn-234, Met-263, Tyr-292, His-328, Ser-348–Gly-350, Asp-389–Arg-392, and Glu-428. Position 432 (His-432) interacts with Zn(2+). Residue Tyr-455 participates in substrate binding. His-496 is a binding site for Zn(2+). [4Fe-4S] cluster contacts are provided by Cys-576, Cys-579, and Cys-584.

The protein belongs to the ThiC family. In terms of assembly, homodimer. It depends on [4Fe-4S] cluster as a cofactor.

The enzyme catalyses 5-amino-1-(5-phospho-beta-D-ribosyl)imidazole + S-adenosyl-L-methionine = 4-amino-2-methyl-5-(phosphooxymethyl)pyrimidine + CO + 5'-deoxyadenosine + formate + L-methionine + 3 H(+). It participates in cofactor biosynthesis; thiamine diphosphate biosynthesis. Catalyzes the synthesis of the hydroxymethylpyrimidine phosphate (HMP-P) moiety of thiamine from aminoimidazole ribotide (AIR) in a radical S-adenosyl-L-methionine (SAM)-dependent reaction. This is Phosphomethylpyrimidine synthase from Baumannia cicadellinicola subsp. Homalodisca coagulata.